The chain runs to 471 residues: MPNSEPASLLELFNSIATQGELVRSLKAGNASKDEIDSAVKMLVSLKMSYKAAAGEDYKADCPPGNPAPTSNHGPDATEAEEDFVDPWTVQTSSAKGIDYDKLIVRFGSSKIDKELINRIERATGQRPHHFLRRGIFFSHRDMNQVLDAYENKKPFYLYTGRGPSSEAMHVGHLIPFIFTKWLQDVFNVPLVIQMTDDEKYLWKDLTLDQAYSYAVENAKDIIACGFDINKTFIFSDLDYMGMSSGFYKNVVKIQKHVTFNQVKGIFGFTDSDCIGKISFPAIQAAPSFSNSFPQIFRDRTDIQCLIPCAIDQDPYFRMTRDVAPRIGYPKPALLHSTFFPALQGAQTKMSASDPNSSIFLTDTAKQIKTKVNKHAFSGGRDTIEEHRQFGGNCDVDVSFMYLTFFLEDDDKLEQIRKDYTSGAMLTGELKKALIEVLQPLIAEHQARRKEVTDEIVKEFMTPRKLSFDFQ.

Residues 8–64 (SLLELFNSIATQGELVRSLKAGNASKDEIDSAVKMLVSLKMSYKAAAGEDYKADCPP) form the WHEP-TRS domain. Residues 59 to 79 (KADCPPGNPAPTSNHGPDATE) form a disordered region. An N6-succinyllysine modification is found at Lys-154. The short motif at 164-173 (PSSEAMHVGH) is the 'HIGH' region element. The 'KMSKS' region signature appears at 349–353 (KMSAS). Position 351 is a phosphoserine (Ser-351).

This sequence belongs to the class-I aminoacyl-tRNA synthetase family. Homodimer. Interacts with an oxidized form of GAPDH. GAPDH stimulates the aminoacylation activity of isoform 2. In terms of processing, proteolytic cleavage generates 2 forms; T1-TrpRS and T2-TrpRS.

The protein resides in the cytoplasm. It carries out the reaction tRNA(Trp) + L-tryptophan + ATP = L-tryptophyl-tRNA(Trp) + AMP + diphosphate + H(+). Catalyzes the attachment of tryptophan to tRNA(Trp) in a two-step reaction: tryptophan is first activated by ATP to form Trp-AMP and then transferred to the acceptor end of the tRNA(Trp). In terms of biological role, has no angiostatic activity. Its function is as follows. Possesses an angiostatic activity but has no aminoacylation activity. Inhibits fluid shear stress-activated responses of endothelial cells. Regulates ERK, Akt, and eNOS activation pathways that are associated with angiogenesis, cytoskeletal reorganization and shear stress-responsive gene expression. Functionally, has an angiostatic activity. The protein is Tryptophan--tRNA ligase, cytoplasmic of Homo sapiens (Human).